The following is a 236-amino-acid chain: Ribose-5-phosphate isomerase A (236 aa).

Residues 28–31, 83–86, and 96–99 contribute to the substrate site; these read TGST, DGAD, and KGGG. Glutamate 105 (proton acceptor) is an active-site residue. Lysine 123 serves as a coordination point for substrate.

This sequence belongs to the ribose 5-phosphate isomerase family. As to quaternary structure, homodimer.

It carries out the reaction aldehydo-D-ribose 5-phosphate = D-ribulose 5-phosphate. The protein operates within carbohydrate degradation; pentose phosphate pathway; D-ribose 5-phosphate from D-ribulose 5-phosphate (non-oxidative stage): step 1/1. Its function is as follows. Catalyzes the reversible conversion of ribose-5-phosphate to ribulose 5-phosphate. In Methylorubrum populi (strain ATCC BAA-705 / NCIMB 13946 / BJ001) (Methylobacterium populi), this protein is Ribose-5-phosphate isomerase A.